The chain runs to 85 residues: Elongation factor 1-beta (85 aa).

Belongs to the EF-1-beta/EF-1-delta family.

Its function is as follows. Promotes the exchange of GDP for GTP in EF-1-alpha/GDP, thus allowing the regeneration of EF-1-alpha/GTP that could then be used to form the ternary complex EF-1-alpha/GTP/AAtRNA. This is Elongation factor 1-beta from Methanosphaerula palustris (strain ATCC BAA-1556 / DSM 19958 / E1-9c).